A 79-amino-acid polypeptide reads, in one-letter code: Hematopoietic cell signal transducer (79 aa).

An N-terminal signal peptide occupies residues Met1–Ala17. Over Ser18–Leu35 the chain is Extracellular. A helical transmembrane segment spans residues Leu36 to Val56. The Cytoplasmic segment spans residues Cys57–Gly79. A Phosphotyrosine modification is found at Tyr72. The segment at Tyr72 to Asn74 is GRB2 binding site. The segment at Tyr72–Met75 is PIK3R1 binding site.

This sequence belongs to the DAP10 family. As to quaternary structure, homodimer; Disulfide-linked. Interacts with KLRK1 to form a stable complex, which results in surface expression of both proteins, whereas alone, it is minimally expressed. Interacts with PIK3R1 and GRB2. Interacts with CLEC5A. Forms an CLEC5A/TYROBP/HCST trimolecular complex depending almost solely on TYROBP. Heterohexamer composed of four subunits of HCST/DAP10 and two subunits of KLRK1. Interacts (via transmembrane domain) with KLRK1 isoform 1 (via transmembrane domain); the interaction is required for KLRK1 cell surface expression on naive NK cells and activated CD8(+) T-cells, but is dispensable on activated TYROBP-expressing NK cells. Interacts (via transmembrane domain) with KLRK1 isoform 2 (via transmembrane domain); the interaction is required for KLRK1 NK cell surface expression and induces NK cell-mediated cytotoxicity. Interacts with CD300H. Phosphorylated; PIK3R1 and GRB2 associate specifically with tyrosine-phosphorylated HCST. Post-translationally, O-glycosylated.

The protein resides in the membrane. In terms of biological role, transmembrane adapter protein which associates with KLRK1 to form an activation receptor KLRK1-HCST in lymphoid and myeloid cells; this receptor plays a major role in triggering cytotoxicity against target cells expressing cell surface ligands such as MHC class I chain-related MICA and MICB, and UL16-binding proteins (ULBPs); these ligands are up-regulated by stress conditions and pathological state such as viral infection and tumor transformation. Functions as a docking site for PI3-kinase PIK3R1 and GRB2. Interaction of ULBPs with KLRK1-HCST triggers calcium mobilization and activation of the PIK3R1, MAP2K/ERK, and JAK2/STAT5 signaling pathways. Both PIK3R1 and GRB2 are required for full KLRK1-HCST-mediated activation and ultimate killing of target cells. In NK cells, KLRK1-HCST signaling directly induces cytotoxicity and enhances cytokine production initiated via DAP12/TYROBP-associated receptors. In T-cells, it provides primarily costimulation for TCR-induced signals. KLRK1-HCST receptor plays a role in immune surveillance against tumors and is required for cytolysis of tumors cells; indeed, melanoma cells that do not express KLRK1 ligands escape from immune surveillance mediated by NK cells. The protein is Hematopoietic cell signal transducer (Hcst) of Mus musculus (Mouse).